Here is a 1376-residue protein sequence, read N- to C-terminus: DNA-directed RNA polymerase subunit beta (1376 aa).

This sequence belongs to the RNA polymerase beta chain family. As to quaternary structure, the RNAP catalytic core consists of 2 alpha, 1 beta, 1 beta' and 1 omega subunit. When a sigma factor is associated with the core the holoenzyme is formed, which can initiate transcription.

The catalysed reaction is RNA(n) + a ribonucleoside 5'-triphosphate = RNA(n+1) + diphosphate. Its function is as follows. DNA-dependent RNA polymerase catalyzes the transcription of DNA into RNA using the four ribonucleoside triphosphates as substrates. The polypeptide is DNA-directed RNA polymerase subunit beta (Methylorubrum extorquens (strain PA1) (Methylobacterium extorquens)).